The sequence spans 434 residues: Sodium/bile acid cotransporter 5 (434 aa).

The first 18 residues, 1 to 18 (MSGNFFIFLLLLVTPGEA), serve as a signal peptide directing secretion. Over 19 to 129 (KKSFLSFLNI…VRVFRQTDDS (111 aa)) the chain is Extracellular. Residues asparagine 73 and asparagine 96 are each glycosylated (N-linked (GlcNAc...) asparagine). The helical transmembrane segment at 130-150 (LLQAPIHVDSSIFLLVLSMIL) threads the bilayer. The Cytoplasmic segment spans residues 151-172 (LNKCAFGCKIEFQVLQTVWKRP). Residues 173–193 (LPILLGVVIQFFLMPFCGFLL) traverse the membrane as a helical segment. At 194–203 (SQILGLPKAQ) the chain is on the extracellular side. Residues 204 to 226 (AFGFVMTCTCPGGGGGYLFALLL) form a helical membrane-spanning segment. The Cytoplasmic segment spans residues 227 to 232 (EGDVTL). Residues 233–255 (AILMTCTSTSLALIMMPVNSYFY) form a helical membrane-spanning segment. At 256–268 (SRLLGLAGAFHVP) the chain is on the extracellular side. Residues 269–289 (VLKIVSTLLFILMPMSTGVII) traverse the membrane as a helical segment. Topologically, residues 290-306 (KHKMPAKAICLERVVRP) are cytoplasmic. Residues 307–327 (LSLTLMFVGIYLAFRMGLVFL) form a helical membrane-spanning segment. The Extracellular segment spans residues 328-331 (RMAN). The chain crosses the membrane as a helical span at residues 332–352 (LEVFLLGLLVPALGLLFGYSL). The Cytoplasmic portion of the chain corresponds to 353–365 (AKVYLLPLPVCKT). The helical transmembrane segment at 366 to 386 (VALETGMLNSFLALAIIQLSF) threads the bilayer. Over 387–395 (SQPKAHEAS) the chain is Extracellular. The helical transmembrane segment at 396–416 (VAPFTVAMCSSCEMLLLLLVY) threads the bilayer. Residues 417–434 (KAKRRPSLSTEYEKTPLV) lie on the Cytoplasmic side of the membrane.

This sequence belongs to the bile acid:sodium symporter (BASS) (TC 2.A.28) family.

The protein localises to the membrane. The sequence is that of Sodium/bile acid cotransporter 5 (Slc10a5) from Mus musculus (Mouse).